The chain runs to 592 residues: Beta-fructofuranosidase, insoluble isoenzyme 1 (592 aa).

The N-terminal stretch at 1 to 39 (MGVTIRNRNYDHGSLPFLQSLLAILLVTTTTLHINGVEA) is a signal peptide. Positions 40–48 (FHEIHYNLQ) are excised as a propeptide. Asp74 is a catalytic residue. A glycan (N-linked (GlcNAc...) (complex) asparagine) is linked at Asn170. A glycan (N-linked (GlcNAc...) asparagine) is linked at Asn195. Asn311 is a glycosylation site (N-linked (GlcNAc...) (complex) asparagine). A glycan (N-linked (GlcNAc...) (high mannose) asparagine) is linked at Asn348. Asn570 carries N-linked (GlcNAc...) asparagine glycosylation.

This sequence belongs to the glycosyl hydrolase 32 family. As to expression, in leaves and roots of young plants.

It localises to the secreted. The protein localises to the cell wall. It carries out the reaction Hydrolysis of terminal non-reducing beta-D-fructofuranoside residues in beta-D-fructofuranosides.. May play an important role in phloem unloading and in stress response. This Daucus carota (Wild carrot) protein is Beta-fructofuranosidase, insoluble isoenzyme 1 (INV1).